Consider the following 349-residue polypeptide: MSFNISNAEILNILLEGGNLDELTSSLLMQRWLNDEISDVQTGAFLSALRAKGCTGVELSSMAEELLKVCELPVARPNLYMVDTCGTGGDGANTFNISTAVAFVAASCGAKIAKHGNKSASGKVGSADVLLNLGLNLNCSLKKVISAVNEIGITFLFAPVWHKSLIKLAPLRKALGIRTVFNQLGPLVNPLRPNAQVLGVASEDLLEPMGSALLKMGMNRVIVVHGSGGLDEASLQGDNKLVFVEKGKLRFSKINILDFNHENIPNDKLVVSGSDSNEEILKSVLNGSGQKSHKDVVALNAALVLWAAGIEDDLHKGFNKALFSINQGNPWEKFLLLKTYLSSDDLISP.

Residues glycine 86, 89–90 (GD), threonine 94, 96–99 (NIST), 114–122 (KHGNKSASG), and serine 126 contribute to the 5-phospho-alpha-D-ribose 1-diphosphate site. Glycine 86 lines the anthranilate pocket. Position 98 (serine 98) interacts with Mg(2+). Residue asparagine 117 participates in anthranilate binding. Arginine 172 is an anthranilate binding site. Positions 231 and 232 each coordinate Mg(2+).

It belongs to the anthranilate phosphoribosyltransferase family. In terms of assembly, homodimer. The cofactor is Mg(2+).

It catalyses the reaction N-(5-phospho-beta-D-ribosyl)anthranilate + diphosphate = 5-phospho-alpha-D-ribose 1-diphosphate + anthranilate. Its pathway is amino-acid biosynthesis; L-tryptophan biosynthesis; L-tryptophan from chorismate: step 2/5. Its function is as follows. Catalyzes the transfer of the phosphoribosyl group of 5-phosphorylribose-1-pyrophosphate (PRPP) to anthranilate to yield N-(5'-phosphoribosyl)-anthranilate (PRA). This Prochlorococcus marinus (strain MIT 9312) protein is Anthranilate phosphoribosyltransferase.